Consider the following 290-residue polypeptide: Phycobilisome 32.3 kDa linker polypeptide, phycocyanin-associated, rod (290 aa).

Residues 1 to 179 (MPVTVAASRL…LQRGYANSDR (179 aa)) enclose the PBS-linker domain. A CpcD-like domain is found at 236–288 (DQVVRVEVAALSTPRYPRIRRSSRVFFVPVSRLSQKLQEIQRMGGRVASISPA).

Belongs to the phycobilisome linker protein family.

It localises to the cellular thylakoid membrane. In terms of biological role, rod linker protein, associated with phycocyanin. Linker polypeptides determine the state of aggregation and the location of the disk-shaped phycobiliprotein units within the phycobilisome and modulate their spectroscopic properties in order to mediate a directed and optimal energy transfer. The chain is Phycobilisome 32.3 kDa linker polypeptide, phycocyanin-associated, rod (cpcC) from Picosynechococcus sp. (strain ATCC 27264 / PCC 7002 / PR-6) (Agmenellum quadruplicatum).